Consider the following 150-residue polypeptide: D-aminoacyl-tRNA deacylase (150 aa).

Residues 138-139 (GP) carry the Gly-cisPro motif, important for rejection of L-amino acids motif.

The protein belongs to the DTD family. In terms of assembly, homodimer.

It is found in the cytoplasm. It carries out the reaction glycyl-tRNA(Ala) + H2O = tRNA(Ala) + glycine + H(+). The catalysed reaction is a D-aminoacyl-tRNA + H2O = a tRNA + a D-alpha-amino acid + H(+). Its function is as follows. An aminoacyl-tRNA editing enzyme that deacylates mischarged D-aminoacyl-tRNAs. Also deacylates mischarged glycyl-tRNA(Ala), protecting cells against glycine mischarging by AlaRS. Acts via tRNA-based rather than protein-based catalysis; rejects L-amino acids rather than detecting D-amino acids in the active site. By recycling D-aminoacyl-tRNA to D-amino acids and free tRNA molecules, this enzyme counteracts the toxicity associated with the formation of D-aminoacyl-tRNA entities in vivo and helps enforce protein L-homochirality. This Parabacteroides distasonis (strain ATCC 8503 / DSM 20701 / CIP 104284 / JCM 5825 / NCTC 11152) protein is D-aminoacyl-tRNA deacylase.